A 282-amino-acid polypeptide reads, in one-letter code: Undecaprenyl-diphosphatase (282 aa).

Helical transmembrane passes span 7–29 (VLFAILQGATELFPVSSLGHVVI), 45–65 (FLPFVVMLHVGTATALLLYFW), 89–109 (GLLLRLVVATLPAVLIGFALK), 115–135 (LFASPEIAAAFLIANGAVLII), 153–173 (LTLRDSLVIGLFQCLAFLPGL), 196–216 (FAFLMATPVIAGAAVIEVPHL), 229–249 (TALLAAVVAGVVAYLSTAFLM), and 258–278 (WALGPFAAYCALFGALSLILI).

It belongs to the UppP family.

Its subcellular location is the cell inner membrane. It carries out the reaction di-trans,octa-cis-undecaprenyl diphosphate + H2O = di-trans,octa-cis-undecaprenyl phosphate + phosphate + H(+). Catalyzes the dephosphorylation of undecaprenyl diphosphate (UPP). Confers resistance to bacitracin. In Acidiphilium cryptum (strain JF-5), this protein is Undecaprenyl-diphosphatase.